Consider the following 107-residue polypeptide: Iron-binding protein IscA (107 aa).

3 residues coordinate Fe cation: cysteine 35, cysteine 99, and cysteine 101.

The protein belongs to the HesB/IscA family. As to quaternary structure, homodimer; may form tetramers and higher multimers. Fe cation is required as a cofactor.

Functionally, is able to transfer iron-sulfur clusters to apo-ferredoxin. Multiple cycles of [2Fe2S] cluster formation and transfer are observed, suggesting that IscA acts catalytically. Recruits intracellular free iron so as to provide iron for the assembly of transient iron-sulfur cluster in IscU in the presence of IscS, L-cysteine and the thioredoxin reductase system TrxA/TrxB. This Klebsiella pneumoniae (strain 342) protein is Iron-binding protein IscA.